Consider the following 489-residue polypeptide: Lysine--tRNA ligase (489 aa).

Residues E399 and E406 each contribute to the Mg(2+) site.

This sequence belongs to the class-II aminoacyl-tRNA synthetase family. In terms of assembly, homodimer. Requires Mg(2+) as cofactor.

The protein localises to the cytoplasm. It carries out the reaction tRNA(Lys) + L-lysine + ATP = L-lysyl-tRNA(Lys) + AMP + diphosphate. The polypeptide is Lysine--tRNA ligase (Roseiflexus castenholzii (strain DSM 13941 / HLO8)).